The primary structure comprises 434 residues: Ribosomal protein uS12 methylthiotransferase RimO (434 aa).

Residues 6–122 (NRVFLLSLGC…ILTAIGARYR (117 aa)) form the MTTase N-terminal domain. [4Fe-4S] cluster contacts are provided by cysteine 15, cysteine 51, cysteine 85, cysteine 146, cysteine 150, and cysteine 153. The 230-residue stretch at 132–361 (TAPGHTSFLK…MELQEGISEE (230 aa)) folds into the Radical SAM core domain. One can recognise a TRAM domain in the interval 364 to 431 (KRLEGREIAV…PYELFGTVLK (68 aa)).

Belongs to the methylthiotransferase family. RimO subfamily. [4Fe-4S] cluster serves as cofactor.

The protein resides in the cytoplasm. The catalysed reaction is L-aspartate(89)-[ribosomal protein uS12]-hydrogen + (sulfur carrier)-SH + AH2 + 2 S-adenosyl-L-methionine = 3-methylsulfanyl-L-aspartate(89)-[ribosomal protein uS12]-hydrogen + (sulfur carrier)-H + 5'-deoxyadenosine + L-methionine + A + S-adenosyl-L-homocysteine + 2 H(+). Catalyzes the methylthiolation of an aspartic acid residue of ribosomal protein uS12. This Chlorobium phaeovibrioides (strain DSM 265 / 1930) (Prosthecochloris vibrioformis (strain DSM 265)) protein is Ribosomal protein uS12 methylthiotransferase RimO.